The primary structure comprises 127 residues: Mitochondrial pyruvate carrier 2 (127 aa).

The Mitochondrial matrix portion of the chain corresponds to 2–40 (SAAGARGLRATYHRLLDKVELMLPEKLRPLYNHPAGPRT). A helical transmembrane segment spans residues 41–61 (VFFWAPIMKRGLVCAGLADMA). The Mitochondrial intermembrane portion of the chain corresponds to 62-72 (RPAEKLSTAQS). A helical membrane pass occupies residues 73-90 (AVLMATGFIWSRYSLVII). At 91 to 95 (PKNWS) the chain is on the mitochondrial matrix side. A helical transmembrane segment spans residues 96-115 (LFAVNFFVGAAGASQLFRIW). The Mitochondrial intermembrane portion of the chain corresponds to 116–127 (RYNQELKAKAHK).

This sequence belongs to the mitochondrial pyruvate carrier (MPC) (TC 2.A.105) family. In terms of assembly, homodimer. Homooligomer. Forms heterodimers with MPC1 and MPC1L. The heterodimer is the more stable and dominant form.

The protein resides in the mitochondrion inner membrane. It catalyses the reaction pyruvate(out) + H(+)(out) = pyruvate(in) + H(+)(in). Functionally, mediates the uptake of pyruvate into mitochondria. This chain is Mitochondrial pyruvate carrier 2 (MPC2), found in Pongo abelii (Sumatran orangutan).